The sequence spans 67 residues: V-type proton ATPase subunit e (67 aa).

Topologically, residues 1–2 (MG) are lumenal. A helical transmembrane segment spans residues 3–23 (GLVVLLVGLLTALMSVVSYYV). At 24-35 (SPKGNNTSTWQM) the chain is on the cytoplasmic side. A helical membrane pass occupies residues 36 to 56 (SLILTFSCCYLLWAITYLAQL). Residues 57 to 67 (HPLEAPSRVLE) lie on the Lumenal side of the membrane.

Belongs to the V-ATPase e1/e2 subunit family. As to quaternary structure, V-ATPase is a heteromultimeric enzyme composed of a peripheral catalytic V1 complex (components A to H) attached to an integral membrane V0 proton pore complex (components: a, c, c', c'', d, e, f and VOA1).

The protein resides in the vacuole membrane. In terms of biological role, subunit of the V0 complex of vacuolar(H+)-ATPase (V-ATPase), a multisubunit enzyme composed of a peripheral complex (V1) that hydrolyzes ATP and a membrane integral complex (V0) that translocates protons. V-ATPase is responsible for acidifying and maintaining the pH of intracellular compartments. This Schizosaccharomyces pombe (strain 972 / ATCC 24843) (Fission yeast) protein is V-type proton ATPase subunit e (vma9).